A 138-amino-acid chain; its full sequence is Ribosome-binding factor A (138 aa).

The tract at residues 112–138 (EARTQGQEPAADVEPAPGAAPDDEAEE) is disordered. A compositionally biased stretch (low complexity) spans 119–131 (EPAADVEPAPGAA).

This sequence belongs to the RbfA family. In terms of assembly, monomer. Binds 30S ribosomal subunits, but not 50S ribosomal subunits or 70S ribosomes.

The protein resides in the cytoplasm. In terms of biological role, one of several proteins that assist in the late maturation steps of the functional core of the 30S ribosomal subunit. Associates with free 30S ribosomal subunits (but not with 30S subunits that are part of 70S ribosomes or polysomes). Required for efficient processing of 16S rRNA. May interact with the 5'-terminal helix region of 16S rRNA. The protein is Ribosome-binding factor A of Anaeromyxobacter dehalogenans (strain 2CP-C).